We begin with the raw amino-acid sequence, 289 residues long: Ribosomal protein L11 methyltransferase (289 aa).

Residues Thr134, Gly155, Asp177, and Asn225 each coordinate S-adenosyl-L-methionine.

This sequence belongs to the methyltransferase superfamily. PrmA family.

It localises to the cytoplasm. It carries out the reaction L-lysyl-[protein] + 3 S-adenosyl-L-methionine = N(6),N(6),N(6)-trimethyl-L-lysyl-[protein] + 3 S-adenosyl-L-homocysteine + 3 H(+). Its function is as follows. Methylates ribosomal protein L11. This is Ribosomal protein L11 methyltransferase from Parasynechococcus marenigrum (strain WH8102).